The following is a 227-amino-acid chain: Ribosomal RNA large subunit methyltransferase E (227 aa).

Gly-78, Trp-80, Asp-103, Asp-119, and Asp-143 together coordinate S-adenosyl-L-methionine. Lys-183 (proton acceptor) is an active-site residue.

It belongs to the class I-like SAM-binding methyltransferase superfamily. RNA methyltransferase RlmE family.

The protein resides in the cytoplasm. The catalysed reaction is uridine(2552) in 23S rRNA + S-adenosyl-L-methionine = 2'-O-methyluridine(2552) in 23S rRNA + S-adenosyl-L-homocysteine + H(+). Functionally, specifically methylates the uridine in position 2552 of 23S rRNA at the 2'-O position of the ribose in the fully assembled 50S ribosomal subunit. This is Ribosomal RNA large subunit methyltransferase E from Rickettsia felis (strain ATCC VR-1525 / URRWXCal2) (Rickettsia azadi).